The sequence spans 460 residues: Nucleosome assembly protein 1-like 2 (460 aa).

2 stretches are compositionally biased toward basic and acidic residues: residues 1–11 and 27–36; these read MAESENRKELS and LGEHLERGED. Disordered stretches follow at residues 1–88 and 214–238; these read MAES…ADRP and EEEE…EDPK. The segment covering 214 to 236 has biased composition (acidic residues); that stretch reads EEEEEEEEDDIEATGEENKEEED. The Nuclear localization signal motif lies at 346–352; it reads IKKKQKH.

It belongs to the nucleosome assembly protein (NAP) family.

It is found in the nucleus. Acidic protein which may be involved in interactions with other proteins or DNA. The chain is Nucleosome assembly protein 1-like 2 (NAP1L2) from Homo sapiens (Human).